The primary structure comprises 323 residues: Small ribosomal subunit protein mS35 (323 aa).

The disordered stretch occupies residues 31–59; it reads PVPTPSLPERTPGNERPPRRKALPPRTEK. The stretch at 257 to 321 forms a coiled coil; it reads SSERNILETL…YKESVKRLLN (65 aa).

The protein belongs to the mitochondrion-specific ribosomal protein mS35 family. In terms of assembly, component of the mitochondrial small ribosomal subunit (mt-SSU). Mature mammalian 55S mitochondrial ribosomes consist of a small (28S) and a large (39S) subunit. The 28S small subunit contains a 12S ribosomal RNA (12S mt-rRNA) and 30 different proteins. The 39S large subunit contains a 16S rRNA (16S mt-rRNA), a copy of mitochondrial valine transfer RNA (mt-tRNA(Val)), which plays an integral structural role, and 52 different proteins.

It is found in the mitochondrion. This chain is Small ribosomal subunit protein mS35, found in Homo sapiens (Human).